The following is a 949-amino-acid chain: Valine--tRNA ligase (949 aa).

The 'HIGH' region motif lies at 45–55; sequence PNVTGVLHMGH. A 'KMSKS' region motif is present at residues 561–565; sequence KMSKS. Lys-564 provides a ligand contact to ATP. Positions 882–949 form a coiled coil; that stretch reads EELLKQEKTR…EIKEKLMTLP (68 aa).

Belongs to the class-I aminoacyl-tRNA synthetase family. ValS type 1 subfamily. In terms of assembly, monomer.

The protein localises to the cytoplasm. It catalyses the reaction tRNA(Val) + L-valine + ATP = L-valyl-tRNA(Val) + AMP + diphosphate. In terms of biological role, catalyzes the attachment of valine to tRNA(Val). As ValRS can inadvertently accommodate and process structurally similar amino acids such as threonine, to avoid such errors, it has a 'posttransfer' editing activity that hydrolyzes mischarged Thr-tRNA(Val) in a tRNA-dependent manner. In Protochlamydia amoebophila (strain UWE25), this protein is Valine--tRNA ligase.